The sequence spans 505 residues: Protein disulfide-isomerase A3 (505 aa).

The N-terminal stretch at 1 to 24 is a signal peptide; the sequence is MRLRRLALFPGVALLLAAARLAAA. One can recognise a Thioredoxin 1 domain in the interval 25 to 133; the sequence is SDVLELTDDN…IVSHLKKQAG (109 aa). Active-site nucleophile residues include cysteine 57 and cysteine 60. Cysteine 57 and cysteine 60 form a disulfide bridge. Position 61 is an N6-methyllysine (lysine 61). A disulfide bond links cysteine 85 and cysteine 92. Residue lysine 129 is modified to N6-succinyllysine. Residue lysine 152 is modified to N6-acetyllysine. Residue lysine 218 is modified to N6-succinyllysine. N6-acetyllysine is present on lysine 252. A Phosphothreonine modification is found at threonine 319. One can recognise a Thioredoxin 2 domain in the interval 343-485; sequence SRDGKALERF…FISYLQREAT (143 aa). Lysine 362 carries the post-translational modification N6-acetyllysine. Residues cysteine 406 and cysteine 409 each act as nucleophile in the active site. A disulfide bridge links cysteine 406 with cysteine 409. The interval 484-505 is disordered; it reads ATNPPVIQEEKPKKKKKAQEDL. Basic and acidic residues predominate over residues 491–505; it reads QEEKPKKKKKAQEDL. Lysine 494 carries the N6-acetyllysine modification. A Prevents secretion from ER motif is present at residues 502 to 505; the sequence is QEDL.

Part of the major histocompatibility complex class I (MHC I) peptide loading complex composed of TAP1, TAP2, B2M, MHC heavy chain, TAPBP, PDIA3, and CALR. Interacts with ERP27 and CANX. Interacts with SERPINA2 and with the S and Z variants of SERPINA1. Interacts with ATP2A2. Within the major histocompatibility complex class I (MHC I) peptide loading complex forms reversible disulfide-linked heterodimers with TAPBP as part of its protein folding chaperone activity. This is essential to assist the dynamic assembly of the MHC I complex with high affinity antigens in the endoplasmic reticulum. Post-translationally, phosphorylated. In terms of tissue distribution, detected in the flagellum and head region of spermatozoa (at protein level). Expressed in liver, stomach and colon (at protein level). Expressed in gastric parietal cells and chief cells (at protein level).

It is found in the endoplasmic reticulum. It localises to the endoplasmic reticulum lumen. The protein localises to the melanosome. The catalysed reaction is Catalyzes the rearrangement of -S-S- bonds in proteins.. Its activity is regulated as follows. Association with calcitriol does not affect its enzymatic activity. Functionally, protein disulfide isomerase that catalyzes the formation, isomerization, and reduction or oxidation of disulfide bonds in client proteins and functions as a protein folding chaperone. Core component of the major histocompatibility complex class I (MHC I) peptide loading complex where it functions as an essential folding chaperone for TAPBP. Through TAPBP, assists the dynamic assembly of the MHC I complex with high affinity antigens in the endoplasmic reticulum. Therefore, plays a crucial role in the presentation of antigens to cytotoxic T cells in adaptive immunity. This Homo sapiens (Human) protein is Protein disulfide-isomerase A3.